Here is a 562-residue protein sequence, read N- to C-terminus: Probable malate:quinone oxidoreductase (562 aa).

It belongs to the MQO family. Requires FAD as cofactor.

It catalyses the reaction (S)-malate + a quinone = a quinol + oxaloacetate. It functions in the pathway carbohydrate metabolism; tricarboxylic acid cycle; oxaloacetate from (S)-malate (quinone route): step 1/1. The chain is Probable malate:quinone oxidoreductase from Stenotrophomonas maltophilia (strain K279a).